The primary structure comprises 588 residues: Succinate dehydrogenase flavoprotein subunit (588 aa).

FAD is bound by residues 14-19, 37-52, and Asp221; these read GAGGAG and SKVF…AQGG. His45 is modified (tele-8alpha-FAD histidine). Positions 242 and 254 each coordinate substrate. At Lys267 the chain carries N6-acetyllysine. Catalysis depends on Arg286, which acts as the Proton acceptor. His354 contributes to the substrate binding site. Glu388 contributes to the FAD binding site. A substrate-binding site is contributed by Arg399. 404-405 is a binding site for FAD; the sequence is SL.

It belongs to the FAD-dependent oxidoreductase 2 family. FRD/SDH subfamily. As to quaternary structure, part of an enzyme complex containing four subunits: a flavoprotein, an iron-sulfur, cytochrome b-556, and a hydrophobic anchor protein. The complex forms trimers. The cofactor is FAD.

Its subcellular location is the cell inner membrane. It catalyses the reaction a quinone + succinate = fumarate + a quinol. It participates in carbohydrate metabolism; tricarboxylic acid cycle; fumarate from succinate (bacterial route): step 1/1. Its function is as follows. Two distinct, membrane-bound, FAD-containing enzymes are responsible for the catalysis of fumarate and succinate interconversion; the fumarate reductase is used in anaerobic growth, and the succinate dehydrogenase is used in aerobic growth. In Escherichia coli O157:H7, this protein is Succinate dehydrogenase flavoprotein subunit (sdhA).